The chain runs to 231 residues: MSEIKDVIVQGLWKNNSALVQLLGLCPLLAVTSTATNALGLGLATTLVLTLTNLTISTLRHWTPAEIRIPIYVMIIASVVSAVQMLINAYAFGLYQSLGIFIPLIVTNCIVVGRAEAFAAKKGPALSALDGFSIGMGATCAMFVLGSLREIIGNGTLFDGADALLGSWAKVLRVEIFHTDSPFLLAMLPPGAFIGLGLMLAGKYLIDERMKKRRTEAAAERALPNGETGNV.

Transmembrane regions (helical) follow at residues 18 to 38, 39 to 59, 63 to 83, 86 to 106, 125 to 145, and 182 to 202; these read ALVQ…ATNA, LGLG…ISTL, TPAE…VSAV, LINA…PLIV, ALSA…MFVL, and PFLL…MLAG.

This sequence belongs to the NqrDE/RnfAE family. In terms of assembly, the complex is composed of six subunits: RsxA, RsxB, RsxC, RsxD, RsxE and RsxG.

The protein resides in the cell inner membrane. Its function is as follows. Part of a membrane-bound complex that couples electron transfer with translocation of ions across the membrane. Required to maintain the reduced state of SoxR. This Shigella boydii serotype 18 (strain CDC 3083-94 / BS512) protein is Ion-translocating oxidoreductase complex subunit E.